The sequence spans 451 residues: COBRA-like protein 6 (451 aa).

Positions 1 to 21 (MAVLGSLLLLILAATLSVAVA) are cleaved as a signal peptide. 8 N-linked (GlcNAc...) asparagine glycosylation sites follow: Asn-30, Asn-155, Asn-163, Asn-202, Asn-227, Asn-323, Asn-338, and Asn-357. Asn-426 carries the GPI-anchor amidated asparagine lipid modification. Positions 427–451 (AAPPAAASLVGSAVAMAALVFFLMA) are cleaved as a propeptide — removed in mature form.

The protein belongs to the COBRA family.

Its subcellular location is the cell membrane. Involved in determining the orientation of cell expansion, probably by playing an important role in cellulose deposition. May act by recruiting cellulose synthesizing complexes to discrete positions on the cell surface. This is COBRA-like protein 6 (BC1L7) from Oryza sativa subsp. japonica (Rice).